The primary structure comprises 446 residues: Histidinol dehydrogenase homolog (446 aa).

H266 provides a ligand contact to Zn(2+). Active-site proton acceptor residues include E334 and H335. Position 427 (H427) interacts with Zn(2+).

The protein belongs to the histidinol dehydrogenase family. Requires Zn(2+) as cofactor.

The protein is Histidinol dehydrogenase homolog of Colwellia psychrerythraea (strain 34H / ATCC BAA-681) (Vibrio psychroerythus).